A 249-amino-acid chain; its full sequence is Phosphoserine phosphatase (249 aa).

The protein belongs to the HAD-like hydrolase superfamily. Homodimer. It depends on Mg(2+) as a cofactor. Requires Co(2+) as cofactor.

It catalyses the reaction O-phospho-L-serine + H2O = L-serine + phosphate. It carries out the reaction O-phospho-D-serine + H2O = D-serine + phosphate. Its pathway is amino-acid biosynthesis; L-serine biosynthesis; L-serine from 3-phospho-D-glycerate: step 3/3. In terms of biological role, catalyzes the last step of the phosphorylated serine biosynthetic pathway, i.e. dephosphorylation of O-phospho-L-serine to form L-serine. Is also able to dephosphorylate O-phospho-D-serine with similar efficiency. Displays a poor activity on L-phosphothreonine, and cannot use L-phosphotyrosine, pyridoxal phosphate, glucose 6-phosphate, or fructose 6-phosphate as substrates. The protein is Phosphoserine phosphatase of Thermus thermophilus (strain ATCC BAA-163 / DSM 7039 / HB27).